We begin with the raw amino-acid sequence, 703 residues long: MKRFFNEACDINTPDKSGVNENKLCFPPLKVVCQAPETTVKGQVANTNKHNVYSTKNSMYLLGFEEILNTVLDCEPHIFTDDELRVIENFKALDSDERYLFVRLFMRKRNKWFRVGHLTYPDCKDVIACCKQLVLKNFFEDESLMSTEEIIEILSLDELRSLARQTKVCGKSRSEISKEIIFLSKRQSVLHCNGQQFLSFDAFGVMHKQESFLRKQLLYQCKSCVKPKKILVDLFHRINIVYFRSSIYDEQSLTSLILARLNKFSYPNYVLSRTSNVFNCRAQCLEYVEVLELSKNLVPIFENTAASDKEALEQALNSFFEIYPIWSTYLNEDIREFWVEENRKVDTRLVRFSFSFRPGAVYTYLIHKSLNILAKSRLVEVEHEILDTLLSQNIYLVGKRGHWYNRKALLEYNFKTEDTNVLRYWKTLALSTCENGIEDKYTHLRYYFSLQRRLVRLRKCLKVSNTTELKSMKLINNNPSRLFLHGERIHNGDLSNRTVWRSKTNNAITVEELALQHYQSIGWEGIHAESSILLTLFALTFWDILFEDVPGVFQSPFQSAPLDLHTDSFYISRESTIMKRLEEIRNGKAGLIIKDNYIREHQRKTFCVGLNWSYTCEMLLEIVDCINDNGLAQIFLALTQDYKNSSSGIPDLCLWNPSKKKFMFSEVKSDNDRLSEAQKFWISLLISSEVDVEVCHVSMHKKK.

Residues glutamate 529, aspartate 651, glutamate 666, and valine 667 each contribute to the Mn(2+) site. In terms of domain architecture, VRR-NUC spans 597 to 698 (YIREHQRKTF…EVDVEVCHVS (102 aa)).

Belongs to the FAN1 family. Mn(2+) is required as a cofactor. The cofactor is Mg(2+).

Its subcellular location is the nucleus. The enzyme catalyses Hydrolytically removes 5'-nucleotides successively from the 3'-hydroxy termini of 3'-hydroxy-terminated oligonucleotides.. Its function is as follows. Nuclease required for the repair of DNA interstrand cross-links (ICL). Acts as a 5'-3' exonuclease that anchors at a cut end of DNA and cleaves DNA successively at every third nucleotide, allowing to excise an ICL from one strand through flanking incisions. The polypeptide is Fanconi-associated nuclease 1 homolog (Schizosaccharomyces pombe (strain 972 / ATCC 24843) (Fission yeast)).